A 2338-amino-acid polypeptide reads, in one-letter code: Proto-oncogene tyrosine-protein kinase ROS (2338 aa).

The N-terminal stretch at 1–27 is a signal peptide; it reads MKRIRWLTPKPATFVVLGCVWISVAQG. Residues 28–1853 lie on the Extracellular side of the membrane; that stretch reads TILSSCLTSC…EDGFWITETS (1826 aa). N-linked (GlcNAc...) asparagine glycosylation is found at asparagine 52 and asparagine 77. 2 consecutive Fibronectin type-III domains span residues 110–205 and 206–294; these read LPTA…VPET and APFI…PSPA. Asparagine 333, asparagine 361, asparagine 480, asparagine 623, asparagine 934, and asparagine 1010 each carry an N-linked (GlcNAc...) asparagine glycan. In terms of domain architecture, Fibronectin type-III 3 spans 566-666; the sequence is LPGHPQEVSV…EPSVGTTLVP (101 aa). 2 Fibronectin type-III domains span residues 942-1037 and 1038-1145; these read IPDS…SVPS and APEN…TSEI. A glycan (N-linked (GlcNAc...) asparagine) is linked at asparagine 1298. 4 Fibronectin type-III domains span residues 1440-1548, 1549-1648, 1650-1743, and 1744-1845; these read VASN…TKSG, VPGA…VNMF, TPEK…TKAG, and VPSK…LVED. N-linked (GlcNAc...) asparagine glycosylation occurs at asparagine 1675. Residues 1854 to 1874 traverse the membrane as a helical segment; it reads FILTIIVGIFLVATVPLTFVW. At 1875–2338 the chain is on the cytoplasmic side; the sequence is HRSLKNHKAT…AHSGHGDVSE (464 aa). A Protein kinase domain is found at 1937–2210; sequence LSLRLLLGSG…YNIQDQLQLF (274 aa). ATP is bound by residues 1943 to 1951 and lysine 1972; that span reads LGSGAFGEV. Catalysis depends on aspartate 2071, which acts as the Proton acceptor. Phosphotyrosine; by autocatalysis is present on tyrosine 2266. Positions 2277–2314 are disordered; that stretch reads EDRYEGPLGSKESGLHDLKKDERQPADKDFCQQPQVAY. The span at 2289-2306 shows a compositional bias: basic and acidic residues; it reads SGLHDLKKDERQPADKDF. Phosphotyrosine; by autocatalysis is present on tyrosine 2325.

Belongs to the protein kinase superfamily. Tyr protein kinase family. Insulin receptor subfamily. In terms of assembly, interacts with PTPN11; may activate the PI3 kinase-mTOR signaling pathway. Interacts with VAV3; constitutive interaction mediating VAV3 phosphorylation. Interacts with PTPN6 (via SH2 1 domain); the interaction is direct and promotes ROS1 dephosphorylation. Phosphorylated. Probably autophosphorylates. Phosphorylation at Tyr-2266 is required for the interaction with PTPN6 that mediates ROS1 dephosphorylation. Phosphorylation at Tyr-2266 stimulates the kinase activity and the activation of the ERK1 signaling cascade. Phosphorylation at Tyr-2266 and/or Tyr-2325 recruits PTPN11. Expressed in heart, lung, kidney and testis.

Its subcellular location is the cell membrane. It carries out the reaction L-tyrosyl-[protein] + ATP = O-phospho-L-tyrosyl-[protein] + ADP + H(+). Inhibited by dephosphorylation by PTPN6. Its function is as follows. Orphan receptor tyrosine kinase (RTK) that plays a role in epithelial cell differentiation and regionalization of the proximal epididymal epithelium. NELL2 is an endogenous ligand for ROS1. Upon endogenous stimulation by NELL2, ROS1 activates the intracellular signaling pathway and triggers epididymal epithelial differentiation and subsequent sperm maturation. May activate several downstream signaling pathways related to cell differentiation, proliferation, growth and survival including the PI3 kinase-mTOR signaling pathway. Mediates the phosphorylation of PTPN11, an activator of this pathway. May also phosphorylate and activate the transcription factor STAT3 to control anchorage-independent cell growth. Mediates the phosphorylation and the activation of VAV3, a guanine nucleotide exchange factor regulating cell morphology. May activate other downstream signaling proteins including AKT1, MAPK1, MAPK3, IRS1 and PLCG2. This chain is Proto-oncogene tyrosine-protein kinase ROS (Ros1), found in Rattus norvegicus (Rat).